The chain runs to 478 residues: Probable cyclin-dependent kinase 9 (478 aa).

The segment covering Met1–Arg17 has biased composition (polar residues). The disordered stretch occupies residues Met1–Asn55. Residues Pro22 to Lys32 show a composition bias toward basic and acidic residues. The region spanning Tyr85–Phe413 is the Protein kinase domain. ATP contacts are provided by residues Ile91–Val99 and Lys114. Asp217 acts as the Proton acceptor in catalysis. The tract at residues His444–Phe478 is disordered. The span at Gln451–Pro464 shows a compositional bias: low complexity.

It belongs to the protein kinase superfamily. CMGC Ser/Thr protein kinase family. CDC2/CDKX subfamily. As to quaternary structure, associates with cyclin-T (cit-1.1 or cit-1.2) to form P-TEFb.

The protein localises to the nucleus. The enzyme catalyses L-seryl-[protein] + ATP = O-phospho-L-seryl-[protein] + ADP + H(+). It carries out the reaction L-threonyl-[protein] + ATP = O-phospho-L-threonyl-[protein] + ADP + H(+). The catalysed reaction is [DNA-directed RNA polymerase] + ATP = phospho-[DNA-directed RNA polymerase] + ADP + H(+). Essential member of the cyclin-dependent kinase pair (CDK9/cyclin-T) complex, also called positive transcription elongation factor B (P-TEFb), which is proposed to facilitate the transition from abortive to production elongation by phosphorylating the CTD (C-terminal domain) of the large subunit of RNA polymerase II (RNAP II) and spt-5. This chain is Probable cyclin-dependent kinase 9 (cdk-9), found in Caenorhabditis elegans.